Here is a 56-residue protein sequence, read N- to C-terminus: Ferredoxin (56 aa).

2 consecutive 4Fe-4S ferredoxin-type domains span residues 2–29 (AYVI…AGDD) and 29–56 (DKYV…PQPE). Residues cysteine 9, cysteine 12, cysteine 15, cysteine 19, cysteine 38, cysteine 41, cysteine 44, and cysteine 48 each coordinate [4Fe-4S] cluster.

[4Fe-4S] cluster is required as a cofactor.

Ferredoxins are iron-sulfur proteins that transfer electrons in a wide variety of metabolic reactions. In Acetoanaerobium sticklandii (strain ATCC 12662 / DSM 519 / JCM 1433 / CCUG 9281 / NCIMB 10654 / HF) (Clostridium sticklandii), this protein is Ferredoxin.